The primary structure comprises 422 residues: Imidazolonepropionase (422 aa).

His82 and His84 together coordinate Fe(3+). 2 residues coordinate Zn(2+): His82 and His84. Positions 91, 154, and 187 each coordinate 4-imidazolone-5-propanoate. Tyr154 contributes to the N-formimidoyl-L-glutamate binding site. Position 252 (His252) interacts with Fe(3+). His252 is a Zn(2+) binding site. Glu255 contributes to the 4-imidazolone-5-propanoate binding site. Asp327 serves as a coordination point for Fe(3+). Residue Asp327 coordinates Zn(2+). Positions 329 and 331 each coordinate N-formimidoyl-L-glutamate. Ser332 provides a ligand contact to 4-imidazolone-5-propanoate.

It belongs to the metallo-dependent hydrolases superfamily. HutI family. The cofactor is Zn(2+). It depends on Fe(3+) as a cofactor.

The protein resides in the cytoplasm. The catalysed reaction is 4-imidazolone-5-propanoate + H2O = N-formimidoyl-L-glutamate. It functions in the pathway amino-acid degradation; L-histidine degradation into L-glutamate; N-formimidoyl-L-glutamate from L-histidine: step 3/3. In terms of biological role, catalyzes the hydrolytic cleavage of the carbon-nitrogen bond in imidazolone-5-propanoate to yield N-formimidoyl-L-glutamate. It is the third step in the universal histidine degradation pathway. The polypeptide is Imidazolonepropionase (Alkaliphilus oremlandii (strain OhILAs) (Clostridium oremlandii (strain OhILAs))).